The primary structure comprises 200 residues: MARQNKQEAIYEFIKEQLREKGYPPSVREICNAVELRSTSTVHGHLKRLEEKGVIRRDPTKPRAIEVLEHSIMKKEMVDIPVVGTVTAGKPILAVENIEDTFALPINYVRNKKQLFALKIKGDSMIDTGILDGDLAIVEKNNSVLNGEIVVALLGDRATVKRFFKEKDYIRLQPENETMEPIIVKQCEIIGKVVGVYRKY.

Positions 27 to 47 (VREICNAVELRSTSTVHGHLK) form a DNA-binding region, H-T-H motif. Residues S124 and K161 each act as for autocatalytic cleavage activity in the active site.

This sequence belongs to the peptidase S24 family. As to quaternary structure, homodimer.

The enzyme catalyses Hydrolysis of Ala-|-Gly bond in repressor LexA.. In terms of biological role, represses a number of genes involved in the response to DNA damage (SOS response), including recA and lexA. In the presence of single-stranded DNA, RecA interacts with LexA causing an autocatalytic cleavage which disrupts the DNA-binding part of LexA, leading to derepression of the SOS regulon and eventually DNA repair. This chain is LexA repressor, found in Clostridium tetani (strain Massachusetts / E88).